The following is a 494-amino-acid chain: MAFNFIRAAAAGAAMALCGVGSVHAAVNLPALKIDKTQTTVSGLSSGGFMAVQLHVAYSATFAKGAGVVAGGPFYCAEGSIVNATGRCMASPAGIPTSTLVSTTNTWASQGVIDPVANLQNSKVYLFSGTLDSVVKTGVMDALRTYYNSFVPAANVVYKKDIAAEHAMVTDDYGNACSTKGAPYISDCNFDLAGAMLQHLYGTLNARNNATLPTGNYIEFNQSEFITNHGMATTGWAYVPQACQAGGTATCKLHVVLHGCKQNIGDVQQQYVRNTGYNRWADTNNIVMLYPQTSTAATNSCWDWWGYDSANYSKKSGPQMAAIKAMVDRVSSGTGGTTPPDPVALPAPTGVSTSGATASSMAIGWAAVMGAASYNVYRNANKVNALPVTATSYTDTGLAASTTYSWTVRAADANGAEGATSAAASGTTLAASGGGTATCTTASNYAHTLAGRAYAAGGYTYALGSNQNMGLWNVFVTNTLKQTSTNYYVIGTCP.

An N-terminal signal peptide occupies residues Met-1 to Ala-25. The active-site Nucleophile is Ser-45. Catalysis depends on charge relay system residues Asp-132 and His-166. Positions Ala-347–Ala-431 constitute a Fibronectin type-III domain.

It belongs to the AB hydrolase superfamily. Lipase family.

It localises to the secreted. It carries out the reaction [(3R)-hydroxybutanoate](n) + H2O = [(3R)-hydroxybutanoate](n-2) + (3R)-hydroxybutanoate dimer + H(+). The enzyme catalyses [(3R)-hydroxybutanoate](n) + H2O = [(3R)-hydroxybutanoate](n-1) + (R)-3-hydroxybutanoate + H(+). The catalysed reaction is (3R)-hydroxybutanoate dimer + H2O = 2 (R)-3-hydroxybutanoate + H(+). Functionally, catalyzes the hydrolysis of poly(3-hydroxybutyrate) (PHB) film, producing the monomer and dimer of 3-hydroxybutyrate (3HB), while the 3HB trimer and tetramer are not formed. The polypeptide is Poly(3-hydroxybutyrate) depolymerase (Delftia acidovorans (Pseudomonas acidovorans)).